The chain runs to 738 residues: 1,4-alpha-glucan branching enzyme GlgB (738 aa).

Catalysis depends on aspartate 399, which acts as the Nucleophile. The Proton donor role is filled by glutamate 452.

It belongs to the glycosyl hydrolase 13 family. GlgB subfamily. In terms of assembly, monomer.

It carries out the reaction Transfers a segment of a (1-&gt;4)-alpha-D-glucan chain to a primary hydroxy group in a similar glucan chain.. Its pathway is glycan biosynthesis; glycogen biosynthesis. In terms of biological role, catalyzes the formation of the alpha-1,6-glucosidic linkages in glycogen by scission of a 1,4-alpha-linked oligosaccharide from growing alpha-1,4-glucan chains and the subsequent attachment of the oligosaccharide to the alpha-1,6 position. This chain is 1,4-alpha-glucan branching enzyme GlgB, found in Chlamydia trachomatis serovar L2b (strain UCH-1/proctitis).